Here is a 307-residue protein sequence, read N- to C-terminus: 4-hydroxythreonine-4-phosphate dehydrogenase (307 aa).

Residues His126 and Thr127 each coordinate substrate. His156, His195, and His251 together coordinate a divalent metal cation. Residues Lys259, Asn268, and Arg277 each contribute to the substrate site.

It belongs to the PdxA family. Homodimer. Zn(2+) is required as a cofactor. The cofactor is Mg(2+). Requires Co(2+) as cofactor.

The protein resides in the cytoplasm. It catalyses the reaction 4-(phosphooxy)-L-threonine + NAD(+) = 3-amino-2-oxopropyl phosphate + CO2 + NADH. The protein operates within cofactor biosynthesis; pyridoxine 5'-phosphate biosynthesis; pyridoxine 5'-phosphate from D-erythrose 4-phosphate: step 4/5. Functionally, catalyzes the NAD(P)-dependent oxidation of 4-(phosphooxy)-L-threonine (HTP) into 2-amino-3-oxo-4-(phosphooxy)butyric acid which spontaneously decarboxylates to form 3-amino-2-oxopropyl phosphate (AHAP). The protein is 4-hydroxythreonine-4-phosphate dehydrogenase of Helicobacter pylori (strain G27).